Consider the following 271-residue polypeptide: Short chain dehydrogenase asqE (271 aa).

Ile-22, Asp-70, and Asn-99 together coordinate NADP(+). Residues Ser-152 and Ser-153 each act as proton donor in the active site. NADP(+) is bound by residues Tyr-167, Lys-171, and Thr-203. Residue Tyr-167 is the Proton acceptor of the active site. The active-site Lowers pKa of active site Tyr is Lys-171.

The protein belongs to the short-chain dehydrogenases/reductases (SDR) family.

It catalyses the reaction a primary alcohol + NAD(+) = an aldehyde + NADH + H(+). It carries out the reaction a secondary alcohol + NAD(+) = a ketone + NADH + H(+). The protein operates within secondary metabolite biosynthesis. It functions in the pathway alkaloid biosynthesis. It participates in mycotoxin biosynthesis. Functionally, short chain dehydrogenase; part of the gene cluster that mediates the biosynthesis of the aspoquinolone mycotoxins. The role of asqE within the aspoquinolone pathway has still to be determined. The first step of the pathway is catalyzed by the nonribosomal peptide synthetase asqK that condenses anthranilic acid and O-methyl-L-tyrosine to produce 4'-methoxycyclopeptin. 4'-methoxycyclopeptin is then converted to 4'-methoxydehydrocyclopeptin by the ketoglutarate-dependent dioxygenase asqJ. AsqJ also converts its first product 4'-methoxydehydrocyclopeptin to 4'-methoxycyclopenin. The following conversion of 4'-methoxycyclopenin into 4'-methoxyviridicatin is catalyzed by the cyclopenase asqI. 4'-methoxyviridicatin is the precursor of quinolone natural products, and is further converted to quinolinone B. The prenyltransferase asqH1 then catalyzes the canonical Friedel-Crafts alkylation of quinolinone B with dimethylallyl cation to yield dimethylallyl quinolone, which is subjected to FAD-dependent dehydrogenation by the FAD-linked oxidoreductase asqF to yield conjugated aryl diene. The delta(3') double bond then serves as the site of the second alkylation with DMAPP catalyzed by the prenyltransferase asqH2 to yield a carbenium ion intermediate, which can be attacked by H(2)O to yield a styrenyl quinolone containing a C3'-hydroxyprenyl chain. The FAD-dependent monooxygenase asqG performs epoxidation of the terminal C7'-C8' olefin. Finally, after dehydratation of the epoxide at C3 by asqC, the quinolone epoxide rearrangement protein asqO catalyzes an enzymatic 3-exo-tet cyclization to yield the cyclopropyl-THF ring system in aspoquinolone. This Emericella nidulans (strain FGSC A4 / ATCC 38163 / CBS 112.46 / NRRL 194 / M139) (Aspergillus nidulans) protein is Short chain dehydrogenase asqE.